A 306-amino-acid chain; its full sequence is Acetyl-coenzyme A carboxylase carboxyl transferase subunit beta (306 aa).

The CoA carboxyltransferase N-terminal domain occupies 27 to 296 (LWHKCPSCEA…PKFVAAPIEP (270 aa)). 4 residues coordinate Zn(2+): cysteine 31, cysteine 34, cysteine 50, and cysteine 53. The segment at 31–53 (CPSCEAVLYRPELEKTLDVCPKC) adopts a C4-type zinc-finger fold.

This sequence belongs to the AccD/PCCB family. As to quaternary structure, acetyl-CoA carboxylase is a heterohexamer composed of biotin carboxyl carrier protein (AccB), biotin carboxylase (AccC) and two subunits each of ACCase subunit alpha (AccA) and ACCase subunit beta (AccD). It depends on Zn(2+) as a cofactor.

It localises to the cytoplasm. The enzyme catalyses N(6)-carboxybiotinyl-L-lysyl-[protein] + acetyl-CoA = N(6)-biotinyl-L-lysyl-[protein] + malonyl-CoA. The protein operates within lipid metabolism; malonyl-CoA biosynthesis; malonyl-CoA from acetyl-CoA: step 1/1. Functionally, component of the acetyl coenzyme A carboxylase (ACC) complex. Biotin carboxylase (BC) catalyzes the carboxylation of biotin on its carrier protein (BCCP) and then the CO(2) group is transferred by the transcarboxylase to acetyl-CoA to form malonyl-CoA. This chain is Acetyl-coenzyme A carboxylase carboxyl transferase subunit beta, found in Pseudomonas fluorescens (strain Pf0-1).